The sequence spans 342 residues: 4-hydroxythreonine-4-phosphate dehydrogenase (342 aa).

Substrate is bound by residues H140 and T141. Residues H175, H220, and H275 each coordinate a divalent metal cation. 3 residues coordinate substrate: K283, N292, and R301.

It belongs to the PdxA family. In terms of assembly, homodimer. Zn(2+) serves as cofactor. It depends on Mg(2+) as a cofactor. The cofactor is Co(2+).

It is found in the cytoplasm. The enzyme catalyses 4-(phosphooxy)-L-threonine + NAD(+) = 3-amino-2-oxopropyl phosphate + CO2 + NADH. Its pathway is cofactor biosynthesis; pyridoxine 5'-phosphate biosynthesis; pyridoxine 5'-phosphate from D-erythrose 4-phosphate: step 4/5. Its function is as follows. Catalyzes the NAD(P)-dependent oxidation of 4-(phosphooxy)-L-threonine (HTP) into 2-amino-3-oxo-4-(phosphooxy)butyric acid which spontaneously decarboxylates to form 3-amino-2-oxopropyl phosphate (AHAP). The chain is 4-hydroxythreonine-4-phosphate dehydrogenase from Rhizobium meliloti (strain 1021) (Ensifer meliloti).